The sequence spans 523 residues: MSQQVDKIKASYPLFLDQDYKDMLAKKRDGFEEKYPQDKIDEVFQWTTTKEYQELNFQREALTVNPAKACQPLGAVLCALGFEKTMPYVHGSQGCVAYFRSYFNRHFREPVSCVSDSMTEDAAVFGGQQNMKDGLQNCKATYKPDMIAVSTTCMAEVIGDDLNAFINNSKKEGFIPDEFPVPFAHTPSFVGSHVTGWDNMFEGIARYFTLKSMDDKVVGSNKKINIVPGFETYLGNFRVIKRMLSEMGVGYSLLSDPEEVLDTPADGQFRMYAGGTTQEEMKDAPNALNTVLLQPWHLEKTKKFVEGTWKHEVPKLNIPMGLDWTDEFLMKVSEISGQPIPASLTKERGRLVDMMTDSHTWLHGKRFALWGDPDFVMGLVKFLLELGCEPVHILCHNGNKRWKKAVDAILAASPYGKNATVYIGKDLWHLRSLVFTDKPDFMIGNSYGKFIQRDTLHKGKEFEVPLIRIGFPIFDRHHLHRSTTLGYEGAMQILTTLVNSILERLDEETRGMQATDYNHDLVR.

Positions 70, 95, 153, and 188 each coordinate [8Fe-7S] cluster.

Belongs to the NifD/NifK/NifE/NifN family. Tetramer of two alpha and two beta chains. Forms complex with the iron protein (nitrogenase component 2). Requires [8Fe-7S] cluster as cofactor.

The catalysed reaction is N2 + 8 reduced [2Fe-2S]-[ferredoxin] + 16 ATP + 16 H2O = H2 + 8 oxidized [2Fe-2S]-[ferredoxin] + 2 NH4(+) + 16 ADP + 16 phosphate + 6 H(+). Its activity is regulated as follows. Nitrogenase holoenzyme is subject to 'conformational protection' by FeSII; under oxidizing conditions FeSII binds to the holoenzyme and reversibly protects it from oxidation. In terms of biological role, this molybdenum-iron protein is part of the nitrogenase complex that catalyzes the key enzymatic reactions in nitrogen fixation. The protein is Nitrogenase molybdenum-iron protein beta chain (nifK) of Azotobacter vinelandii.